A 276-amino-acid chain; its full sequence is Formamidopyrimidine-DNA glycosylase (276 aa).

Pro2 (schiff-base intermediate with DNA) is an active-site residue. Residue Glu3 is the Proton donor of the active site. Residue Lys60 is the Proton donor; for beta-elimination activity of the active site. His93 and Arg112 together coordinate DNA. Residues 240 to 274 (NVYGKKGEPCVTCGTILEKTVVGGRGTHYCPICQP) form an FPG-type zinc finger. Residue Arg264 is the Proton donor; for delta-elimination activity of the active site.

This sequence belongs to the FPG family. In terms of assembly, monomer. It depends on Zn(2+) as a cofactor.

The catalysed reaction is Hydrolysis of DNA containing ring-opened 7-methylguanine residues, releasing 2,6-diamino-4-hydroxy-5-(N-methyl)formamidopyrimidine.. The enzyme catalyses 2'-deoxyribonucleotide-(2'-deoxyribose 5'-phosphate)-2'-deoxyribonucleotide-DNA = a 3'-end 2'-deoxyribonucleotide-(2,3-dehydro-2,3-deoxyribose 5'-phosphate)-DNA + a 5'-end 5'-phospho-2'-deoxyribonucleoside-DNA + H(+). In terms of biological role, involved in base excision repair of DNA damaged by oxidation or by mutagenic agents. Acts as a DNA glycosylase that recognizes and removes damaged bases. Has a preference for oxidized purines, such as 7,8-dihydro-8-oxoguanine (8-oxoG). Has AP (apurinic/apyrimidinic) lyase activity and introduces nicks in the DNA strand. Cleaves the DNA backbone by beta-delta elimination to generate a single-strand break at the site of the removed base with both 3'- and 5'-phosphates. This Bacillus cereus (strain ATCC 14579 / DSM 31 / CCUG 7414 / JCM 2152 / NBRC 15305 / NCIMB 9373 / NCTC 2599 / NRRL B-3711) protein is Formamidopyrimidine-DNA glycosylase.